Consider the following 430-residue polypeptide: Tektin-2 (430 aa).

Coiled-coil stretches lie at residues 80–162 (KCLT…FEQL) and 225–382 (NKDR…CKAN).

The protein belongs to the tektin family. Microtubule inner protein component of sperm flagellar doublet microtubules. May interact with CCDC172. In terms of processing, tyrosine phosphorylated. Ubiquitinated, leading to its degradation. Deubiquitinated by USP16, promoting its stability. As to expression, expressed at high levels in testis, trachea and fetal lung, and at lower levels in ovary, pituitary, adult lung, fetal brain and fetal kidney.

It is found in the cytoplasm. Its subcellular location is the cytoskeleton. It localises to the cilium axoneme. The protein localises to the flagellum axoneme. The protein resides in the microtubule organizing center. Its function is as follows. Microtubule inner protein (MIP) part of the dynein-decorated doublet microtubules (DMTs) in cilia and flagellar axoneme. Plays a key role in the assembly or attachment of the inner dynein arm to microtubules in sperm flagella and tracheal cilia. Forms filamentous polymers in the walls of ciliary and flagellar microtubules. This Homo sapiens (Human) protein is Tektin-2.